Reading from the N-terminus, the 220-residue chain is Protein CREG1 (220 aa).

The first 31 residues, 1–31 (MAGLSRGSARALLAALLASTLLALLVSPARG), serve as a signal peptide directing secretion. Asn-160, Asn-193, and Asn-216 each carry an N-linked (GlcNAc...) asparagine glycan.

It belongs to the CREG family. In terms of assembly, homodimer. Interacts with IGF2R; the interaction is dependent on glycosylation. N-glycosylated.

The protein localises to the secreted. May contribute to the transcriptional control of cell growth and differentiation. Antagonizes transcriptional activation and cellular transformation by the adenovirus E1A protein. The transcriptional control activity of cell growth requires interaction with IGF2R. This Homo sapiens (Human) protein is Protein CREG1 (CREG1).